Reading from the N-terminus, the 129-residue chain is DNA-directed RNA polymerase subunit omega (129 aa).

Residues 77 to 98 are disordered; it reads VDEPESEVVPALSSAPQNPEAI.

It belongs to the RNA polymerase subunit omega family. In terms of assembly, the RNAP catalytic core consists of 2 alpha, 1 beta, 1 beta' and 1 omega subunit. When a sigma factor is associated with the core the holoenzyme is formed, which can initiate transcription.

The enzyme catalyses RNA(n) + a ribonucleoside 5'-triphosphate = RNA(n+1) + diphosphate. Its function is as follows. Promotes RNA polymerase assembly. Latches the N- and C-terminal regions of the beta' subunit thereby facilitating its interaction with the beta and alpha subunits. This is DNA-directed RNA polymerase subunit omega from Methylocella silvestris (strain DSM 15510 / CIP 108128 / LMG 27833 / NCIMB 13906 / BL2).